The chain runs to 434 residues: Serine--tRNA ligase (434 aa).

Residue 237-239 (TAE) coordinates L-serine. Position 268 to 270 (268 to 270 (RAE)) interacts with ATP. E291 is an L-serine binding site. Residue 358-361 (EISS) coordinates ATP. S393 lines the L-serine pocket.

Belongs to the class-II aminoacyl-tRNA synthetase family. Type-1 seryl-tRNA synthetase subfamily. As to quaternary structure, homodimer. The tRNA molecule binds across the dimer.

The protein localises to the cytoplasm. It carries out the reaction tRNA(Ser) + L-serine + ATP = L-seryl-tRNA(Ser) + AMP + diphosphate + H(+). The catalysed reaction is tRNA(Sec) + L-serine + ATP = L-seryl-tRNA(Sec) + AMP + diphosphate + H(+). It functions in the pathway aminoacyl-tRNA biosynthesis; selenocysteinyl-tRNA(Sec) biosynthesis; L-seryl-tRNA(Sec) from L-serine and tRNA(Sec): step 1/1. Its function is as follows. Catalyzes the attachment of serine to tRNA(Ser). Is also able to aminoacylate tRNA(Sec) with serine, to form the misacylated tRNA L-seryl-tRNA(Sec), which will be further converted into selenocysteinyl-tRNA(Sec). The chain is Serine--tRNA ligase from Rhodopseudomonas palustris (strain BisB5).